Here is a 196-residue protein sequence, read N- to C-terminus: Protein GrpE (196 aa).

The interval 1–40 (MSSKEQKTPEGQAPEEIIMDQHEEVEAVEPNDSAEQVDPR) is disordered.

This sequence belongs to the GrpE family. As to quaternary structure, homodimer.

The protein resides in the cytoplasm. Functionally, participates actively in the response to hyperosmotic and heat shock by preventing the aggregation of stress-denatured proteins, in association with DnaK and GrpE. It is the nucleotide exchange factor for DnaK and may function as a thermosensor. Unfolded proteins bind initially to DnaJ; upon interaction with the DnaJ-bound protein, DnaK hydrolyzes its bound ATP, resulting in the formation of a stable complex. GrpE releases ADP from DnaK; ATP binding to DnaK triggers the release of the substrate protein, thus completing the reaction cycle. Several rounds of ATP-dependent interactions between DnaJ, DnaK and GrpE are required for fully efficient folding. The polypeptide is Protein GrpE (Salmonella enteritidis PT4 (strain P125109)).